Here is a 463-residue protein sequence, read N- to C-terminus: Chromosomal replication initiator protein DnaA (463 aa).

A domain I, interacts with DnaA modulators region spans residues 1-83 (MNTNQIILTD…LQLFQHYNNT (83 aa)). Positions 83–124 (TIKSIDIITKELPGTTQTVIELPTKTFADIGSSELNSENIFS) are domain II. Positions 125 to 343 (TLDVRFTFDN…GALNKVIAHS (219 aa)) are domain III, AAA+ region. ATP-binding residues include Gly-171, Gly-173, Lys-174, and Thr-175. A domain IV, binds dsDNA region spans residues 344–463 (NFTLKEITLE…INLLMKILQH (120 aa)).

The protein belongs to the DnaA family. As to quaternary structure, oligomerizes as a right-handed, spiral filament on DNA at oriC.

Its subcellular location is the cytoplasm. Functionally, plays an essential role in the initiation and regulation of chromosomal replication. ATP-DnaA binds to the origin of replication (oriC) to initiate formation of the DNA replication initiation complex once per cell cycle. Binds the DnaA box (a 9 base pair repeat at the origin) and separates the double-stranded (ds)DNA. Forms a right-handed helical filament on oriC DNA; dsDNA binds to the exterior of the filament while single-stranded (ss)DNA is stabiized in the filament's interior. The ATP-DnaA-oriC complex binds and stabilizes one strand of the AT-rich DNA unwinding element (DUE), permitting loading of DNA polymerase. After initiation quickly degrades to an ADP-DnaA complex that is not apt for DNA replication. Binds acidic phospholipids. The sequence is that of Chromosomal replication initiator protein DnaA from Rickettsia akari (strain Hartford).